The primary structure comprises 184 residues: Guanylate kinase (184 aa).

Residues 5–183 (NGLIVITGPS…ALLEIKKLIK (179 aa)) form the Guanylate kinase-like domain. 12–19 (GPSGVGKG) lines the ATP pocket.

The protein belongs to the guanylate kinase family.

The protein localises to the cytoplasm. It catalyses the reaction GMP + ATP = GDP + ADP. In terms of biological role, essential for recycling GMP and indirectly, cGMP. This Prochlorococcus marinus (strain SARG / CCMP1375 / SS120) protein is Guanylate kinase.